Here is a 189-residue protein sequence, read N- to C-terminus: Large ribosomal subunit protein uL5 (189 aa).

This sequence belongs to the universal ribosomal protein uL5 family. In terms of assembly, part of the 50S ribosomal subunit; part of the 5S rRNA/L5/L18/L25 subcomplex. Contacts the 5S rRNA and the P site tRNA. Forms a bridge to the 30S subunit in the 70S ribosome.

This is one of the proteins that bind and probably mediate the attachment of the 5S RNA into the large ribosomal subunit, where it forms part of the central protuberance. In the 70S ribosome it contacts protein S13 of the 30S subunit (bridge B1b), connecting the 2 subunits; this bridge is implicated in subunit movement. Contacts the P site tRNA; the 5S rRNA and some of its associated proteins might help stabilize positioning of ribosome-bound tRNAs. This is Large ribosomal subunit protein uL5 from Kocuria rhizophila (strain ATCC 9341 / DSM 348 / NBRC 103217 / DC2201).